The chain runs to 278 residues: 3-methyl-2-oxobutanoate hydroxymethyltransferase (278 aa).

Mg(2+) contacts are provided by Asp49 and Asp88. Residues 49 to 50 (DS), Asp88, and Lys118 contribute to the 3-methyl-2-oxobutanoate site. Glu120 serves as a coordination point for Mg(2+). Residue Glu186 is the Proton acceptor of the active site.

Belongs to the PanB family. Homodecamer; pentamer of dimers. Mg(2+) is required as a cofactor.

The protein resides in the cytoplasm. The enzyme catalyses 3-methyl-2-oxobutanoate + (6R)-5,10-methylene-5,6,7,8-tetrahydrofolate + H2O = 2-dehydropantoate + (6S)-5,6,7,8-tetrahydrofolate. The protein operates within cofactor biosynthesis; (R)-pantothenate biosynthesis; (R)-pantoate from 3-methyl-2-oxobutanoate: step 1/2. Its function is as follows. Catalyzes the reversible reaction in which hydroxymethyl group from 5,10-methylenetetrahydrofolate is transferred onto alpha-ketoisovalerate to form ketopantoate. The sequence is that of 3-methyl-2-oxobutanoate hydroxymethyltransferase from Bordetella parapertussis (strain 12822 / ATCC BAA-587 / NCTC 13253).